The sequence spans 310 residues: HPr kinase/phosphorylase (310 aa).

Residues His-138 and Lys-159 contribute to the active site. Residue 153–160 (GKSGVGKS) coordinates ATP. Mg(2+) is bound at residue Ser-160. Catalysis depends on Asp-177, which acts as the Proton acceptor; for phosphorylation activity. Proton donor; for dephosphorylation activity. The interval 201-210 (LEIRGLGIIN) is important for the catalytic mechanism of both phosphorylation and dephosphorylation. Residue Glu-202 coordinates Mg(2+). The active site involves Arg-243. Residues 264–269 (PVRPGR) are important for the catalytic mechanism of dephosphorylation.

The protein belongs to the HPrK/P family. As to quaternary structure, homohexamer. The cofactor is Mg(2+).

The catalysed reaction is [HPr protein]-L-serine + ATP = [HPr protein]-O-phospho-L-serine + ADP + H(+). It carries out the reaction [HPr protein]-O-phospho-L-serine + phosphate + H(+) = [HPr protein]-L-serine + diphosphate. In terms of biological role, catalyzes the ATP- as well as the pyrophosphate-dependent phosphorylation of a specific serine residue in HPr, a phosphocarrier protein of the phosphoenolpyruvate-dependent sugar phosphotransferase system (PTS). HprK/P also catalyzes the pyrophosphate-producing, inorganic phosphate-dependent dephosphorylation (phosphorolysis) of seryl-phosphorylated HPr (P-Ser-HPr). The two antagonistic activities of HprK/P are regulated by several intracellular metabolites, which change their concentration in response to the absence or presence of rapidly metabolisable carbon sources (glucose, fructose, etc.) in the growth medium. Also phosphorylates/dephosphorylates the HPr-like catabolite repression protein crh on a specific serine residue. Therefore, by controlling the phosphorylation state of HPr and crh, HPrK/P is a sensor enzyme that plays a major role in the regulation of carbon metabolism and sugar transport: it mediates carbon catabolite repression (CCR), and regulates PTS-catalyzed carbohydrate uptake and inducer exclusion. The sequence is that of HPr kinase/phosphorylase from Bacillus velezensis (strain DSM 23117 / BGSC 10A6 / LMG 26770 / FZB42) (Bacillus amyloliquefaciens subsp. plantarum).